The primary structure comprises 1843 residues: Cilia- and flagella-associated protein 44 (1843 aa).

The segment at 1–86 (MKEPDDQDTS…PPVEVKEEPE (86 aa)) is disordered. The segment covering 29–39 (LKSSQDTTADS) has biased composition (polar residues). Positions 41 to 58 (TDGEESYLGDDLDLDDMD) are enriched in acidic residues. 7 WD repeats span residues 214-255 (GAEK…PILR), 258-297 (AFSQ…TGLK), 308-346 (TSTS…VELC), 353-390 (CHSG…TADV), 456-495 (FHSG…PLVH), 497-541 (KFKQ…GLTV), and 561-600 (PHTD…KPIG). The disordered stretch occupies residues 701 to 726 (REAFGEEEIPEEETSEEGEEEEPPLP). Over residues 705-724 (GEEEIPEEETSEEGEEEEPP) the composition is skewed to acidic residues. WD repeat units follow at residues 790-829 (TEDN…PFLV) and 842-881 (NNYG…IVPK). Disordered regions lie at residues 1040-1086 (YSKL…SVLE), 1266-1291 (QRKQ…SAGG), and 1488-1524 (KEVE…DDVF). Residues 1047–1071 (SQSERRQSKMERLEKEGPGKKESQR) show a composition bias toward basic and acidic residues. At serine 1069 the chain carries Phosphoserine. A compositionally biased stretch (polar residues) spans 1072–1081 (DTGGSISLQE). Positions 1492-1524 (GDADEDEESEESSEEESSLESDEDASGSEDDVF) are enriched in acidic residues. Coiled-coil stretches lie at residues 1548-1603 (RLDI…RLNE) and 1631-1665 (LVFS…CRER). A WD 10 repeat occupies 1699-1744 (IDLEALQTLSVNTTLEELKIKKLRKELSNAKELRMWEEKIAQVRWD).

This sequence belongs to the CFAP44 family. Expressed in testis.

It is found in the cell projection. Its subcellular location is the cilium. It localises to the flagellum. The protein localises to the cytoplasm. The protein resides in the cytoskeleton. It is found in the flagellum axoneme. Its function is as follows. Flagellar protein involved in sperm flagellum axoneme organization and function. In Mus musculus (Mouse), this protein is Cilia- and flagella-associated protein 44.